The following is a 156-amino-acid chain: Transcription elongation factor GreA (156 aa).

Residues 46–73 (AEYHAAREKQSFIEGRIKELEALLSLAE) adopt a coiled-coil conformation.

The protein belongs to the GreA/GreB family.

Functionally, necessary for efficient RNA polymerase transcription elongation past template-encoded arresting sites. The arresting sites in DNA have the property of trapping a certain fraction of elongating RNA polymerases that pass through, resulting in locked ternary complexes. Cleavage of the nascent transcript by cleavage factors such as GreA or GreB allows the resumption of elongation from the new 3'terminus. GreA releases sequences of 2 to 3 nucleotides. The chain is Transcription elongation factor GreA from Cereibacter sphaeroides (strain ATCC 17025 / ATH 2.4.3) (Rhodobacter sphaeroides).